The sequence spans 98 residues: uncharacterized protein (98 aa).

A disordered region spans residues 77-98; it reads SERAGEEVPPLAVAGSDDGHDH.

This sequence to M.tuberculosis Rv1991c and Rv3269.

This is an uncharacterized protein from Mycobacterium bovis (strain ATCC BAA-935 / AF2122/97).